Here is a 159-residue protein sequence, read N- to C-terminus: Phosphopantetheine adenylyltransferase (159 aa).

Thr-10 contacts substrate. Residues 10–11 (TF) and His-18 each bind ATP. Positions 42, 74, and 88 each coordinate substrate. ATP-binding positions include 89–91 (GLR), Glu-99, and 124–130 (WSFISSS).

This sequence belongs to the bacterial CoaD family. Homohexamer. Requires Mg(2+) as cofactor.

The protein resides in the cytoplasm. The catalysed reaction is (R)-4'-phosphopantetheine + ATP + H(+) = 3'-dephospho-CoA + diphosphate. It participates in cofactor biosynthesis; coenzyme A biosynthesis; CoA from (R)-pantothenate: step 4/5. Its function is as follows. Reversibly transfers an adenylyl group from ATP to 4'-phosphopantetheine, yielding dephospho-CoA (dPCoA) and pyrophosphate. The polypeptide is Phosphopantetheine adenylyltransferase (Escherichia coli O7:K1 (strain IAI39 / ExPEC)).